The sequence spans 237 residues: Class B acid phosphatase (237 aa).

The N-terminal stretch at 1 to 23 (MRKVTLVFSAIAFAFSLNGVVQA) is a signal peptide. D69 serves as the catalytic Nucleophile. The Mg(2+) site is built by D69 and D71. D71 acts as the Proton donor in catalysis. Substrate contacts are provided by residues 137–138 (TG) and K177. D192 is a binding site for Mg(2+).

This sequence belongs to the class B bacterial acid phosphatase family. Homotetramer. It depends on Mg(2+) as a cofactor.

It localises to the periplasm. The catalysed reaction is a phosphate monoester + H2O = an alcohol + phosphate. Dephosphorylates several organic phosphate monoesters. Also has a phosphotransferase activity catalyzing the transfer of low-energy phosphate groups from organic phosphate monoesters to free hydroxyl groups of various organic compounds. This Xenorhabdus bovienii (strain SS-2004) (Xenorhabdus nematophila subsp. bovienii) protein is Class B acid phosphatase.